Consider the following 153-residue polypeptide: D-aminoacyl-tRNA deacylase (153 aa).

Positions 137 to 138 (GP) match the Gly-cisPro motif, important for rejection of L-amino acids motif.

The protein belongs to the DTD family. As to quaternary structure, homodimer.

Its subcellular location is the cytoplasm. The catalysed reaction is glycyl-tRNA(Ala) + H2O = tRNA(Ala) + glycine + H(+). It carries out the reaction a D-aminoacyl-tRNA + H2O = a tRNA + a D-alpha-amino acid + H(+). Functionally, an aminoacyl-tRNA editing enzyme that deacylates mischarged D-aminoacyl-tRNAs. Also deacylates mischarged glycyl-tRNA(Ala), protecting cells against glycine mischarging by AlaRS. Acts via tRNA-based rather than protein-based catalysis; rejects L-amino acids rather than detecting D-amino acids in the active site. By recycling D-aminoacyl-tRNA to D-amino acids and free tRNA molecules, this enzyme counteracts the toxicity associated with the formation of D-aminoacyl-tRNA entities in vivo and helps enforce protein L-homochirality. The polypeptide is D-aminoacyl-tRNA deacylase (Myxococcus xanthus (strain DK1622)).